The chain runs to 98 residues: Putative pterin-4-alpha-carbinolamine dehydratase (98 aa).

The protein belongs to the pterin-4-alpha-carbinolamine dehydratase family.

It catalyses the reaction (4aS,6R)-4a-hydroxy-L-erythro-5,6,7,8-tetrahydrobiopterin = (6R)-L-erythro-6,7-dihydrobiopterin + H2O. The sequence is that of Putative pterin-4-alpha-carbinolamine dehydratase from Roseobacter denitrificans (strain ATCC 33942 / OCh 114) (Erythrobacter sp. (strain OCh 114)).